Reading from the N-terminus, the 321-residue chain is Glycerol-3-phosphate dehydrogenase [NAD(P)+] (321 aa).

Serine 10, phenylalanine 11, arginine 31, arginine 32, and lysine 104 together coordinate NADPH. Positions 104 and 132 each coordinate sn-glycerol 3-phosphate. Position 136 (alanine 136) interacts with NADPH. Sn-glycerol 3-phosphate is bound by residues lysine 186, aspartate 238, serine 248, arginine 249, and asparagine 250. Lysine 186 (proton acceptor) is an active-site residue. Arginine 249 is an NADPH binding site. Residue glutamate 272 participates in NADPH binding.

Belongs to the NAD-dependent glycerol-3-phosphate dehydrogenase family.

It localises to the cytoplasm. The enzyme catalyses sn-glycerol 3-phosphate + NAD(+) = dihydroxyacetone phosphate + NADH + H(+). The catalysed reaction is sn-glycerol 3-phosphate + NADP(+) = dihydroxyacetone phosphate + NADPH + H(+). Catalyzes the reduction of the glycolytic intermediate dihydroxyacetone phosphate (DHAP) to sn-glycerol 3-phosphate (G3P). This Methanothermobacter thermautotrophicus (strain ATCC 29096 / DSM 1053 / JCM 10044 / NBRC 100330 / Delta H) (Methanobacterium thermoautotrophicum) protein is Glycerol-3-phosphate dehydrogenase [NAD(P)+].